Consider the following 128-residue polypeptide: Protein SOB FIVE-LIKE 3 (128 aa).

2 disordered regions span residues 1-26 and 54-128; these read MEREECSSSESGWTTYISSRMEEEEE and KDSD…HKKK. Residues 8 to 18 are compositionally biased toward polar residues; it reads SSESGWTTYIS. An SOFL-A motif is present at residues 11 to 16; sequence SGWTTY. An SOFL-B motif is present at residues 59–68; that stretch reads SMASDASSGP. Positions 80–104 are enriched in basic and acidic residues; that stretch reads REGLALRNGKGESNDVYSHRIDDKN. Positions 111–118 match the Nuclear localization signal motif; the sequence is RKKEKKKS.

It belongs to the SOFL plant protein family. In terms of tissue distribution, expressed in seedlings, roots, flowers and siliques.

The protein localises to the cytoplasm. Its subcellular location is the nucleus. Involved in cytokinin-mediated development. The chain is Protein SOB FIVE-LIKE 3 from Arabidopsis thaliana (Mouse-ear cress).